We begin with the raw amino-acid sequence, 613 residues long: Putative adenosylhomocysteinase 3 (613 aa).

2 stretches are compositionally biased toward low complexity: residues 1-14 (MSVQ…AAKV) and 35-44 (AAAVGAMVPP). The disordered stretch occupies residues 1 to 186 (MSVQVVSAAA…KQQKNSKGSS (186 aa)). N-acetylserine is present on serine 2. Residues 2-111 (SVQVVSAAAA…DGGEALVSPD (110 aa)) form an LISN domain, inhibits interaction with ITPR1 region. Positions 52 to 68 (APAPAPAAERPPAPGPG) are enriched in pro residues. Residues 70–80 (GPTAALSPAAG) show a composition bias toward low complexity. Serine 109 carries the phosphoserine modification. Basic residues predominate over residues 137 to 146 (RPTKIGRRSL). Residues 147–166 (SRSISQSSTDSYSSAASYTD) show a composition bias toward low complexity. Phosphoserine occurs at positions 151, 154, 157, and 160. 3 residues coordinate substrate: threonine 238, aspartate 312, and glutamate 337. NAD(+) is bound at residue 338–340 (SVT). Substrate-binding residues include lysine 367 and aspartate 371. Residues asparagine 372, 403-408 (GEVGKG), glutamate 424, asparagine 459, 480-482 (MGH), and asparagine 527 contribute to the NAD(+) site.

Belongs to the adenosylhomocysteinase family. Homotetramer. Forms heteromultimers with AHCYL1 (via the C-terminal region). Interacts with ITPR1; with lower affinity than AHCYL1 and maybe via ITPR1. Interacts with SLC4A4. Interacts with ZCCHC4. The cofactor is NAD(+). Phosphorylated during neuronal differentiation at the LISN domain. As to expression, highly expressed in cerebrum, cerebellum and kidney. Also expressed in thymus, spleen, testis, ovary and, at lower, levels in lung and liver (at protein level). In cerebellum, expressed in interneurons.

It is found in the cytoplasm. The protein localises to the microsome. The catalysed reaction is S-adenosyl-L-homocysteine + H2O = L-homocysteine + adenosine. It functions in the pathway amino-acid biosynthesis; L-homocysteine biosynthesis; L-homocysteine from S-adenosyl-L-homocysteine: step 1/1. Functionally, may regulate the electrogenic sodium/bicarbonate cotransporter SLC4A4 activity and Mg(2+)-sensitivity. On the contrary of its homolog AHCYL1, does not regulate ITPR1 sensitivity to inositol 1,4,5-trisphosphate. This Mus musculus (Mouse) protein is Putative adenosylhomocysteinase 3 (Ahcyl2).